A 260-amino-acid chain; its full sequence is 6-carboxyhexanoate--CoA ligase (260 aa).

Belongs to the BioW family. As to quaternary structure, homodimer. Requires Mg(2+) as cofactor.

The catalysed reaction is heptanedioate + ATP + CoA = 6-carboxyhexanoyl-CoA + AMP + diphosphate. It participates in metabolic intermediate metabolism; pimeloyl-CoA biosynthesis; pimeloyl-CoA from pimelate: step 1/1. In terms of biological role, catalyzes the transformation of pimelate into pimeloyl-CoA with concomitant hydrolysis of ATP to AMP. The protein is 6-carboxyhexanoate--CoA ligase of Fibrobacter succinogenes (strain ATCC 19169 / S85).